Reading from the N-terminus, the 332-residue chain is Phosphoenolpyruvate transferase (332 aa).

Residue Asp-63 participates in 7,8-didemethyl-8-hydroxy-5-deazariboflavin binding.

It belongs to the CofD family. Homodimer. Mg(2+) serves as cofactor.

It carries out the reaction enolpyruvoyl-2-diphospho-5'-guanosine + 7,8-didemethyl-8-hydroxy-5-deazariboflavin = dehydro coenzyme F420-0 + GMP + H(+). The protein operates within cofactor biosynthesis; coenzyme F420 biosynthesis. In terms of biological role, catalyzes the transfer of the phosphoenolpyruvate moiety from enoylpyruvoyl-2-diphospho-5'-guanosine (EPPG) to 7,8-didemethyl-8-hydroxy-5-deazariboflavin (FO) with the formation of dehydro coenzyme F420-0 and GMP. This is Phosphoenolpyruvate transferase from Nocardia farcinica (strain IFM 10152).